Consider the following 483-residue polypeptide: Probable glycine dehydrogenase (decarboxylating) subunit 2 (483 aa).

The segment at 1–24 (MLIFDHSRPGRTAAAQLPATGGDL) is disordered. The residue at position 264 (Lys-264) is an N6-(pyridoxal phosphate)lysine.

The protein belongs to the GcvP family. C-terminal subunit subfamily. In terms of assembly, the glycine cleavage system is composed of four proteins: P, T, L and H. In this organism, the P 'protein' is a heterodimer of two subunits. The cofactor is pyridoxal 5'-phosphate.

The enzyme catalyses N(6)-[(R)-lipoyl]-L-lysyl-[glycine-cleavage complex H protein] + glycine + H(+) = N(6)-[(R)-S(8)-aminomethyldihydrolipoyl]-L-lysyl-[glycine-cleavage complex H protein] + CO2. Functionally, the glycine cleavage system catalyzes the degradation of glycine. The P protein binds the alpha-amino group of glycine through its pyridoxal phosphate cofactor; CO(2) is released and the remaining methylamine moiety is then transferred to the lipoamide cofactor of the H protein. The polypeptide is Probable glycine dehydrogenase (decarboxylating) subunit 2 (Thiobacillus denitrificans (strain ATCC 25259 / T1)).